The chain runs to 842 residues: Glucans biosynthesis glucosyltransferase H (842 aa).

7 helical membrane-spanning segments follow: residues 140 to 160 (ILLL…KTIL), 194 to 214 (ILIL…TALM), 513 to 533 (VFLT…FLAL), 570 to 590 (LFAS…MLIW), 615 to 635 (VLLA…AFLG), 656 to 676 (FMRH…MAWL), and 680 to 700 (FLFW…VSVV).

The protein belongs to the glycosyltransferase 2 family. OpgH subfamily.

It localises to the cell inner membrane. Its pathway is glycan metabolism; osmoregulated periplasmic glucan (OPG) biosynthesis. Involved in the biosynthesis of osmoregulated periplasmic glucans (OPGs). This chain is Glucans biosynthesis glucosyltransferase H, found in Citrobacter koseri (strain ATCC BAA-895 / CDC 4225-83 / SGSC4696).